The following is a 471-amino-acid chain: Putative multidrug resistance protein MdtD (471 aa).

The Periplasmic segment spans residues 1-11 (MTDLPDSTRWQ). Residues 12–32 (LWIVAFGFFMQSLDTTIVNTA) form a helical membrane-spanning segment. Residues 33–48 (LPSMAQSLGESPLHMH) are Cytoplasmic-facing. A helical membrane pass occupies residues 49–69 (MVIVSYVLTVAVMLPASGWLA). Residues 70–76 (DKVGVRN) lie on the Periplasmic side of the membrane. A helical membrane pass occupies residues 77–97 (IFFTAIVLFTLGSLFCALSGT). The Cytoplasmic segment spans residues 98–101 (LNEL). Residues 102–124 (LLARALQGVGGAMMVPVGRLTVM) traverse the membrane as a helical segment. At 125–137 (KIVPREQYMAAMT) the chain is on the periplasmic side. The chain crosses the membrane as a helical span at residues 138–158 (FVTLPGQVGPLLGPALGGLLV). Residues 159-164 (EYASWH) lie on the Cytoplasmic side of the membrane. The helical transmembrane segment at 165–185 (WIFLINIPVGIIGAIATLMLM) threads the bilayer. At 186-196 (PNYTMQTRRFD) the chain is on the periplasmic side. A helical membrane pass occupies residues 197-217 (LSGFLLLAVGMAVLTLALDGS). Residues 218 to 224 (KGTGLSP) lie on the Cytoplasmic side of the membrane. Residues 225–245 (LAIAGLVAVGVVALVLYLLHA) form a helical membrane-spanning segment. The Periplasmic segment spans residues 246-262 (RNNNRALFSLKLFRTRT). The chain crosses the membrane as a helical span at residues 263–283 (FSLGLAGSFAGRIGSGMLPFM). Topologically, residues 284-285 (TP) are cytoplasmic. The helical transmembrane segment at 286-306 (VFLQIGLGFSPFHAGLMMIPM) threads the bilayer. Topologically, residues 307–341 (VLGSMGMKRIVVQVVNRFGYRRVLVATTLGLSLVT) are periplasmic. A helical transmembrane segment spans residues 342–362 (LLFMTTALLGWYYVLPFVLFL). The Cytoplasmic portion of the chain corresponds to 363-395 (QGMVNSTRFSSMNTLTLKDLPDNLASSGNSLLS). The chain crosses the membrane as a helical span at residues 396–416 (MIMQLSMSIGVTIAGLLLGLF). Over 417–430 (GSQHISVDSGTTQT) the chain is Periplasmic. The helical transmembrane segment at 431 to 451 (VFMYTWLSMAFIIALPAFIFA) threads the bilayer. The Cytoplasmic portion of the chain corresponds to 452–471 (RVPNDTHQNVAISRRKRSAQ).

Belongs to the major facilitator superfamily. TCR/Tet family.

It is found in the cell inner membrane. This chain is Putative multidrug resistance protein MdtD, found in Shigella flexneri.